A 90-amino-acid polypeptide reads, in one-letter code: Small ribosomal subunit protein bS16 (90 aa).

It belongs to the bacterial ribosomal protein bS16 family.

The chain is Small ribosomal subunit protein bS16 from Listeria innocua serovar 6a (strain ATCC BAA-680 / CLIP 11262).